Here is a 113-residue protein sequence, read N- to C-terminus: Transcriptional regulator RamA (113 aa).

Positions 9-107 constitute an HTH araC/xylS-type domain; that stretch reads DTIVEWIDDN…NLPPGAYRKE (99 aa). 2 DNA-binding regions (H-T-H motif) span residues 26–47 and 74–97; these read DDIARHAGYSKWHLQRLFMQYK and VYDICLKYGFDSQQTFTRIFTRTF.

Functionally, transcriptional regulator. Binds to regulatory regions of target genes, including efflux pump operon acrAB and outer membrane protein gene tolC. Represses transcription of genes belonging to the flagellar regulon, including flhD, flhB and fliC; probably thereby leading to repression of motility. Represses expression of the flhDC operon in a post-transcriptional manner. Activates expression of acrAB, perhaps thereby conferring multidrug resistance. Involved in indole- and bile-mediated regulation of acrAB; binding of bile to RamA may contribute to activation of expression of acrAB. Plays a role in regulating virulence in mice. The chain is Transcriptional regulator RamA from Salmonella typhimurium (strain LT2 / SGSC1412 / ATCC 700720).